Here is a 46-residue protein sequence, read N- to C-terminus: METSSPALSVAIGVLAVLFGLTGFGVYQAFGPPSKALDDPFDDHED.

The chain crosses the membrane as a helical span at residues 7–27 (ALSVAIGVLAVLFGLTGFGVY).

It belongs to the PsbN family.

The protein resides in the cellular thylakoid membrane. Functionally, may play a role in photosystem I and II biogenesis. The sequence is that of Protein PsbN from Synechococcus sp. (strain CC9605).